The sequence spans 215 residues: Beta-crystallin A3-1 (215 aa).

Residues 1–30 are N-terminal arm; it reads MEIPVDQTEREDITSEKMAQINPLPVHLGP. 2 Beta/gamma crystallin 'Greek key' domains span residues 31-70 and 71-117; these read WKITVYDQENFQGKRMEFTSSCANIMECGFDNIRSLKVEC and GAWI…RPIC. The connecting peptide stretch occupies residues 118–123; sequence SANHIE. Beta/gamma crystallin 'Greek key' domains lie at 124–165 and 166–214; these read SKLV…KVQC and GAWV…RRIQ.

This sequence belongs to the beta/gamma-crystallin family. Homo/heterodimer, or complexes of higher-order. The structure of beta-crystallin oligomers seems to be stabilized through interactions between the N-terminal arms. Post-translationally, the N-terminus is blocked.

In terms of biological role, crystallins are the dominant structural components of the vertebrate eye lens. The polypeptide is Beta-crystallin A3-1 (Aquarana catesbeiana (American bullfrog)).